A 129-amino-acid polypeptide reads, in one-letter code: MRHYEIVFMVHPDQSEQVAGMIERYTGSITEAGGKIHRLEDWGRRQLAYPINKLHKAHYVLMNVEADQAVIDELETAFRFNDAVLRNMIMRTKAAITEQSIMLKQKEERAPRREERSEAKPEAKSEAAE.

Residues 100–129 (SIMLKQKEERAPRREERSEAKPEAKSEAAE) form a disordered region. Residues 104–129 (KQKEERAPRREERSEAKPEAKSEAAE) are compositionally biased toward basic and acidic residues.

This sequence belongs to the bacterial ribosomal protein bS6 family.

Binds together with bS18 to 16S ribosomal RNA. The sequence is that of Small ribosomal subunit protein bS6 from Vibrio parahaemolyticus serotype O3:K6 (strain RIMD 2210633).